Reading from the N-terminus, the 532-residue chain is Fatty-acid amide hydrolase 2-A (532 aa).

A helical membrane pass occupies residues 9-29 (FLGRLLRAVVWILFAAFKLFA). Catalysis depends on charge relay system residues lysine 129 and serine 204. Catalysis depends on serine 228, which acts as the Acyl-ester intermediate.

The protein belongs to the amidase family.

It localises to the membrane. The catalysed reaction is N-(5Z,8Z,11Z,14Z-eicosatetraenoyl)-ethanolamine + H2O = ethanolamine + (5Z,8Z,11Z,14Z)-eicosatetraenoate. It catalyses the reaction (9Z)-octadecenamide + H2O = (9Z)-octadecenoate + NH4(+). This is Fatty-acid amide hydrolase 2-A (faah2a) from Danio rerio (Zebrafish).